The chain runs to 366 residues: Holliday junction branch migration complex subunit RuvB (366 aa).

Residues 1–50 are disordered; sequence MAIISSKKQPPEPNGEPKQRRESAKAPSTENILKPEAAIDEQEQQEEGIR. The segment at 13-210 is large ATPase domain (RuvB-L); it reads PNGEPKQRRE…FGLIQKLRFY (198 aa). A compositionally biased stretch (basic and acidic residues) spans 15 to 24; sequence GEPKQRRESA. Residues I49, R50, G91, K94, T95, T96, 157–159, R200, Y210, and R247 each bind ATP; that span reads EDY. T95 is a Mg(2+) binding site. The small ATPAse domain (RuvB-S) stretch occupies residues 211-281; the sequence is EVDELTQIVL…IASEALQLFQ (71 aa). The segment at 284–366 is head domain (RuvB-H); the sequence is PCGLDWTDRQ…TPPNEQLSLL (83 aa). Positions 339 and 344 each coordinate DNA.

Belongs to the RuvB family. In terms of assembly, homohexamer. Forms an RuvA(8)-RuvB(12)-Holliday junction (HJ) complex. HJ DNA is sandwiched between 2 RuvA tetramers; dsDNA enters through RuvA and exits via RuvB. An RuvB hexamer assembles on each DNA strand where it exits the tetramer. Each RuvB hexamer is contacted by two RuvA subunits (via domain III) on 2 adjacent RuvB subunits; this complex drives branch migration. In the full resolvosome a probable DNA-RuvA(4)-RuvB(12)-RuvC(2) complex forms which resolves the HJ.

The protein localises to the cytoplasm. It carries out the reaction ATP + H2O = ADP + phosphate + H(+). In terms of biological role, the RuvA-RuvB-RuvC complex processes Holliday junction (HJ) DNA during genetic recombination and DNA repair, while the RuvA-RuvB complex plays an important role in the rescue of blocked DNA replication forks via replication fork reversal (RFR). RuvA specifically binds to HJ cruciform DNA, conferring on it an open structure. The RuvB hexamer acts as an ATP-dependent pump, pulling dsDNA into and through the RuvAB complex. RuvB forms 2 homohexamers on either side of HJ DNA bound by 1 or 2 RuvA tetramers; 4 subunits per hexamer contact DNA at a time. Coordinated motions by a converter formed by DNA-disengaged RuvB subunits stimulates ATP hydrolysis and nucleotide exchange. Immobilization of the converter enables RuvB to convert the ATP-contained energy into a lever motion, pulling 2 nucleotides of DNA out of the RuvA tetramer per ATP hydrolyzed, thus driving DNA branch migration. The RuvB motors rotate together with the DNA substrate, which together with the progressing nucleotide cycle form the mechanistic basis for DNA recombination by continuous HJ branch migration. Branch migration allows RuvC to scan DNA until it finds its consensus sequence, where it cleaves and resolves cruciform DNA. The polypeptide is Holliday junction branch migration complex subunit RuvB (Nostoc punctiforme (strain ATCC 29133 / PCC 73102)).